Here is a 185-residue protein sequence, read N- to C-terminus: Large ribosomal subunit protein uL22 (185 aa).

This sequence belongs to the universal ribosomal protein uL22 family.

The protein is Large ribosomal subunit protein uL22 (RPL17) of Debaryomyces hansenii (strain ATCC 36239 / CBS 767 / BCRC 21394 / JCM 1990 / NBRC 0083 / IGC 2968) (Yeast).